A 141-amino-acid polypeptide reads, in one-letter code: Large ribosomal subunit protein uL11 (141 aa).

The protein belongs to the universal ribosomal protein uL11 family. Part of the ribosomal stalk of the 50S ribosomal subunit. Interacts with L10 and the large rRNA to form the base of the stalk. L10 forms an elongated spine to which L12 dimers bind in a sequential fashion forming a multimeric L10(L12)X complex. One or more lysine residues are methylated.

Functionally, forms part of the ribosomal stalk which helps the ribosome interact with GTP-bound translation factors. This chain is Large ribosomal subunit protein uL11, found in Chlamydia felis (strain Fe/C-56) (Chlamydophila felis).